Here is a 337-residue protein sequence, read N- to C-terminus: Manganese-dependent ADP-ribose/CDP-alcohol diphosphatase (337 aa).

At M1 the chain carries N-acetylmethionine. 7 residues coordinate Zn(2+): D25, Q27, D74, N110, H241, H278, and H280.

Belongs to the ADPRibase-Mn family. In terms of assembly, monomer. It depends on Mg(2+) as a cofactor.

The catalysed reaction is CDP-choline + H2O = phosphocholine + CMP + 2 H(+). It carries out the reaction ADP-D-ribose + H2O = D-ribose 5-phosphate + AMP + 2 H(+). It catalyses the reaction CDP-glycerol + H2O = sn-glycerol 3-phosphate + CMP + 2 H(+). Its function is as follows. Hydrolyzes ADP-ribose, IDP-ribose, CDP-glycerol, CDP-choline and CDP-ethanolamine, but not other non-reducing ADP-sugars or CDP-glucose. May be involved in immune cell signaling as suggested by the second-messenger role of ADP-ribose, which activates TRPM2 as a mediator of oxidative/nitrosative stress. The chain is Manganese-dependent ADP-ribose/CDP-alcohol diphosphatase (ADPRM) from Bos taurus (Bovine).